Here is a 326-residue protein sequence, read N- to C-terminus: MTQSRSATPGPSLDFERELMELETRLDDIRRFAEENNVDVSTQLAEIEARAAELRRDLYANLPPKDILQLARNPKRPSTLDYIQLLCEDWVELHGDRLFGDDLALVGGLARLGDHPVVIMGHQKGRDTKDNIQRNFGMPQPEGYRKALRLMDHANHFQLPIIALIDTPGAHAGVDAEQRGQGEAIARNLQHMFSYEVPILCAVIGEGGSGGALAIGVGNRMLMFEYAVYSVISPDSCSVILWRDKKHIEQAANALKITARDLKQLGIVDEIIPEPSGGAHRDPQRAAANLKEALLRHLDELLTLDGPTRRTQRYEKFRAMARFQEI.

Residues 46-300 (EIEARAAELR…KEALLRHLDE (255 aa)) enclose the CoA carboxyltransferase C-terminal domain.

This sequence belongs to the AccA family. In terms of assembly, acetyl-CoA carboxylase is a heterohexamer composed of biotin carboxyl carrier protein (AccB), biotin carboxylase (AccC) and two subunits each of ACCase subunit alpha (AccA) and ACCase subunit beta (AccD).

It is found in the cytoplasm. The enzyme catalyses N(6)-carboxybiotinyl-L-lysyl-[protein] + acetyl-CoA = N(6)-biotinyl-L-lysyl-[protein] + malonyl-CoA. The protein operates within lipid metabolism; malonyl-CoA biosynthesis; malonyl-CoA from acetyl-CoA: step 1/1. In terms of biological role, component of the acetyl coenzyme A carboxylase (ACC) complex. First, biotin carboxylase catalyzes the carboxylation of biotin on its carrier protein (BCCP) and then the CO(2) group is transferred by the carboxyltransferase to acetyl-CoA to form malonyl-CoA. In Gloeobacter violaceus (strain ATCC 29082 / PCC 7421), this protein is Acetyl-coenzyme A carboxylase carboxyl transferase subunit alpha.